Here is a 305-residue protein sequence, read N- to C-terminus: GMP synthase [glutamine-hydrolyzing] subunit B (305 aa).

Residues 2–185 (VNVDEFIEEA…LDLEEIISER (184 aa)) form the GMPS ATP-PPase domain. 29-35 (SGGVDSS) lines the ATP pocket.

In terms of assembly, heterodimer composed of a glutamine amidotransferase subunit (A) and a GMP-binding subunit (B).

It catalyses the reaction XMP + L-glutamine + ATP + H2O = GMP + L-glutamate + AMP + diphosphate + 2 H(+). The protein operates within purine metabolism; GMP biosynthesis; GMP from XMP (L-Gln route): step 1/1. Catalyzes the synthesis of GMP from XMP. The sequence is that of GMP synthase [glutamine-hydrolyzing] subunit B from Haloarcula marismortui (strain ATCC 43049 / DSM 3752 / JCM 8966 / VKM B-1809) (Halobacterium marismortui).